The chain runs to 89 residues: Small ribosomal subunit protein uS14 (89 aa).

It belongs to the universal ribosomal protein uS14 family. As to quaternary structure, part of the 30S ribosomal subunit. Contacts proteins S3 and S10.

Functionally, binds 16S rRNA, required for the assembly of 30S particles and may also be responsible for determining the conformation of the 16S rRNA at the A site. The polypeptide is Small ribosomal subunit protein uS14 (Porphyromonas gingivalis (strain ATCC 33277 / DSM 20709 / CIP 103683 / JCM 12257 / NCTC 11834 / 2561)).